Reading from the N-terminus, the 915-residue chain is Isoleucine--tRNA ligase (915 aa).

The short motif at Pro-58–His-68 is the 'HIGH' region element. Glu-568 contacts L-isoleucyl-5'-AMP. The 'KMSKS' region motif lies at Lys-609–Ser-613. Lys-612 lines the ATP pocket. 4 residues coordinate Zn(2+): Cys-892, Cys-895, Cys-907, and Cys-910.

Belongs to the class-I aminoacyl-tRNA synthetase family. IleS type 1 subfamily. As to quaternary structure, monomer. Zn(2+) serves as cofactor.

It localises to the cytoplasm. The catalysed reaction is tRNA(Ile) + L-isoleucine + ATP = L-isoleucyl-tRNA(Ile) + AMP + diphosphate. Functionally, catalyzes the attachment of isoleucine to tRNA(Ile). As IleRS can inadvertently accommodate and process structurally similar amino acids such as valine, to avoid such errors it has two additional distinct tRNA(Ile)-dependent editing activities. One activity is designated as 'pretransfer' editing and involves the hydrolysis of activated Val-AMP. The other activity is designated 'posttransfer' editing and involves deacylation of mischarged Val-tRNA(Ile). This chain is Isoleucine--tRNA ligase, found in Wolinella succinogenes (strain ATCC 29543 / DSM 1740 / CCUG 13145 / JCM 31913 / LMG 7466 / NCTC 11488 / FDC 602W) (Vibrio succinogenes).